The primary structure comprises 504 residues: Maturase K (504 aa).

The protein belongs to the intron maturase 2 family. MatK subfamily.

The protein resides in the plastid. Its subcellular location is the chloroplast. In terms of biological role, usually encoded in the trnK tRNA gene intron. Probably assists in splicing its own and other chloroplast group II introns. The chain is Maturase K from Actinidia chinensis (Kiwi).